A 276-amino-acid chain; its full sequence is Rhomboid protease GlpG (276 aa).

6 consecutive transmembrane segments (helical) span residues 94-114, 142-162, 169-189, 192-212, 229-249, and 250-270; these read GPVTWVMMIACVVVFIAMQIL, ALMHFSLMHILFNLLWWWYLG, LGSGKLIVITLISALLSGYVQ, FSGPWFGGLSGVVYALMGYVW, LIIFALIWIVAGWFDLFGMSM, and ANGAHIAGLAVGLAMAFVDSL. The active-site Nucleophile is the Ser201. His254 is a catalytic residue.

It belongs to the peptidase S54 family.

The protein resides in the cell inner membrane. The enzyme catalyses Cleaves type-1 transmembrane domains using a catalytic dyad composed of serine and histidine that are contributed by different transmembrane domains.. Its function is as follows. Rhomboid-type serine protease that catalyzes intramembrane proteolysis. This is Rhomboid protease GlpG from Shigella flexneri serotype 5b (strain 8401).